Here is a 589-residue protein sequence, read N- to C-terminus: Inactive poly [ADP-ribose] polymerase RCD1 (589 aa).

The WWE domain maps to 64 to 153; the sequence is KLSAYENRSG…ETGAKTPLAW (90 aa). Positions 248 to 469 constitute a PARP catalytic domain; the sequence is EAAVSKWDET…LIAKRDNSGV (222 aa). Disordered regions lie at residues 464–504 and 569–589; these read RDNS…TRPK and QPKS…AGGL. A compositionally biased stretch (polar residues) spans 481–503; the sequence is LESNQGARGSGSANSVGSSTTRP. Residues 501-572 form the RST domain; it reads TRPKSPWMPF…ITTLQNQPKS (72 aa). The span at 571–589 shows a compositional bias: basic and acidic residues; sequence KSKEIPGSIRDHEEGAGGL.

In terms of assembly, interacts with the transcription factors NAC013/NTL1 and NAC046. Interacts with dehydration-responsive DREB2 proteins and a number of transcription factors belonging to several protein families. Interacts with turnip crinkle virus (TCV) movement protein P8. In terms of tissue distribution, expressed in young developing tissues, such as young leaves and flowers and root tips. In mature plants, expressed in vasculature of leaves and roots, and guard cells.

The protein localises to the nucleus matrix. In terms of biological role, inactive ADP-ribosyltransferase that functions with SRO1 to regulate oxidative stress, hormonal and developmental responses. Required for embryogenesis, vegetative and reproductive development, and abiotic stress responses. May regulate several stress-responsive genes. Seems to play a larger developmental role than SRO1. Does not bind NAD in vitro. This chain is Inactive poly [ADP-ribose] polymerase RCD1 (RCD1), found in Arabidopsis thaliana (Mouse-ear cress).